Consider the following 380-residue polypeptide: Transcription factor SOX-7 (380 aa).

The disordered stretch occupies residues 24-43; the sequence is SDGLSPPAVPRPSGDKSSES. A DNA-binding region (HMG box) is located at residues 45–113; sequence IRRPMNAFMV…QHMQDYPNYK (69 aa). The tract at residues 139–167 is disordered; the sequence is SRDQNTLPEKNGIGRGEKEDRGEYSPGAT. The Sox C-terminal domain maps to 260-380; sequence VSMMSSVSGC…ATYYNSYSVS (121 aa). Residues 323-328 are required for beta-catenin-binding; that stretch reads EFDQYL.

As to quaternary structure, interacts with CTNNB1/beta-catenin; this interaction may lead to the proteasomal degradation of active CTNNB1 and thus inhibition of Wnt/beta-catenin-stimulated transcription. Predominantly expressed in ovary, lung and heart. In the ovary, restricted to oocytes (at protein level). Present both in mesenchymal and epithelial cells in some adult tissues, including ear.

It is found in the nucleus. It localises to the cytoplasm. Functionally, binds to and activates the CDH5 promoter, hence plays a role in the transcriptional regulation of genes expressed in the hemogenic endothelium and blocks further differentiation into blood precursors. May be required for the survival of both hematopoietic and endothelial precursors during specification. May play a role in skeletal myogenesis and up-regulate the expression of muscle markers, such as PAX3/PAX7 and Meox1. Competes with GATA4 for binding and activation of the FGF3 promoter. Represses Wnt/beta-catenin-stimulated transcription. Probably acts by targeting CTNNB1 to proteasomal degradation. Binds the DNA sequence 5'-AACAAT-3'. The chain is Transcription factor SOX-7 (Sox7) from Mus musculus (Mouse).